The sequence spans 732 residues: Catalase-peroxidase (732 aa).

Positions 1 to 24 are disordered; it reads MDAKTDDNSAGKCPVAHGSAGRTN. A cross-link (tryptophyl-tyrosyl-methioninium (Trp-Tyr) (with M-245)) is located at residues 96-219; it reads WHSAGTYRIA…LGAVQMGLIY (124 aa). H97 serves as the catalytic Proton acceptor. Residues 219-245 constitute a cross-link (tryptophyl-tyrosyl-methioninium (Tyr-Met) (with W-96)); that stretch reads YVNPEGPNGNPDPLAAARDIRDTFARM. A heme b-binding site is contributed by H260.

Belongs to the peroxidase family. Peroxidase/catalase subfamily. As to quaternary structure, homodimer or homotetramer. Requires heme b as cofactor. In terms of processing, formation of the three residue Trp-Tyr-Met cross-link is important for the catalase, but not the peroxidase activity of the enzyme.

The enzyme catalyses H2O2 + AH2 = A + 2 H2O. It catalyses the reaction 2 H2O2 = O2 + 2 H2O. In terms of biological role, bifunctional enzyme with both catalase and broad-spectrum peroxidase activity. This Mesorhizobium japonicum (strain LMG 29417 / CECT 9101 / MAFF 303099) (Mesorhizobium loti (strain MAFF 303099)) protein is Catalase-peroxidase.